We begin with the raw amino-acid sequence, 294 residues long: Universal stress protein MSMEG_3950/MSMEI_3859 (294 aa).

Gly13 is an ATP binding site. Residue Lys109 forms an Isoglutamyl lysine isopeptide (Lys-Gln) (interchain with Q-Cter in protein Pup) linkage. ATP is bound by residues 117–123 (GNRGMGA), 131–132 (ST), Gly164, Asp197, 261–267 (GSHGRGG), and 275–277 (SVS).

It belongs to the universal stress protein A family.

The sequence is that of Universal stress protein MSMEG_3950/MSMEI_3859 from Mycolicibacterium smegmatis (strain ATCC 700084 / mc(2)155) (Mycobacterium smegmatis).